The following is a 451-amino-acid chain: Phosphoglucosamine mutase (451 aa).

Serine 103 serves as the catalytic Phosphoserine intermediate. Mg(2+) is bound by residues serine 103, aspartate 243, aspartate 245, and aspartate 247. Serine 103 is modified (phosphoserine).

This sequence belongs to the phosphohexose mutase family. It depends on Mg(2+) as a cofactor. Activated by phosphorylation.

It carries out the reaction alpha-D-glucosamine 1-phosphate = D-glucosamine 6-phosphate. Catalyzes the conversion of glucosamine-6-phosphate to glucosamine-1-phosphate. In Lactobacillus johnsonii (strain CNCM I-12250 / La1 / NCC 533), this protein is Phosphoglucosamine mutase.